The following is a 611-amino-acid chain: UvrABC system protein C (611 aa).

The GIY-YIG domain maps to aspartate 12–isoleucine 96. A UVR domain is found at glutamate 202–alanine 237.

It belongs to the UvrC family. In terms of assembly, interacts with UvrB in an incision complex.

The protein localises to the cytoplasm. In terms of biological role, the UvrABC repair system catalyzes the recognition and processing of DNA lesions. UvrC both incises the 5' and 3' sides of the lesion. The N-terminal half is responsible for the 3' incision and the C-terminal half is responsible for the 5' incision. The polypeptide is UvrABC system protein C (Nautilia profundicola (strain ATCC BAA-1463 / DSM 18972 / AmH)).